Consider the following 247-residue polypeptide: Segregation and condensation protein A (247 aa).

It belongs to the ScpA family. Component of a cohesin-like complex composed of ScpA, ScpB and the Smc homodimer, in which ScpA and ScpB bind to the head domain of Smc. The presence of the three proteins is required for the association of the complex with DNA.

It localises to the cytoplasm. Its function is as follows. Participates in chromosomal partition during cell division. May act via the formation of a condensin-like complex containing Smc and ScpB that pull DNA away from mid-cell into both cell halves. This chain is Segregation and condensation protein A, found in Bacillus cereus (strain ATCC 10987 / NRS 248).